A 706-amino-acid polypeptide reads, in one-letter code: Mitochondrial intermediate peptidase, mitochondrial (706 aa).

A mitochondrion-targeting transit peptide spans 1-29; it reads MWKLTRRLQPHINSTRWLVRNFRNGGAGD. A disordered region spans residues 212–238; the sequence is NPTYRSTSGGSRGSTRSAHKSKQKGFR. Low complexity predominate over residues 214–227; that stretch reads TYRSTSGGSRGSTR. A Zn(2+)-binding site is contributed by H491. E492 is a catalytic residue. The Zn(2+) site is built by H495 and E520.

This sequence belongs to the peptidase M3 family. Zn(2+) is required as a cofactor.

It localises to the mitochondrion. Aminopeptidase which cleaves preproteins, imported into the mitochondrion, to their mature size. Could cleave both preproteins and preprotein intermediates already cleaved by the mitochondrial processing peptidase (MPP). The protein is Mitochondrial intermediate peptidase, mitochondrial of Arabidopsis thaliana (Mouse-ear cress).